A 124-amino-acid chain; its full sequence is Small ribosomal subunit protein uS12 (124 aa).

Aspartate 89 bears the 3-methylthioaspartic acid mark. The tract at residues 105 to 124 is disordered; the sequence is QGVKNRKQARSRYGAKKEKS. The segment covering 108–118 has biased composition (basic residues); that stretch reads KNRKQARSRYG.

The protein belongs to the universal ribosomal protein uS12 family. As to quaternary structure, part of the 30S ribosomal subunit. Contacts proteins S8 and S17. May interact with IF1 in the 30S initiation complex.

In terms of biological role, with S4 and S5 plays an important role in translational accuracy. Functionally, interacts with and stabilizes bases of the 16S rRNA that are involved in tRNA selection in the A site and with the mRNA backbone. Located at the interface of the 30S and 50S subunits, it traverses the body of the 30S subunit contacting proteins on the other side and probably holding the rRNA structure together. The combined cluster of proteins S8, S12 and S17 appears to hold together the shoulder and platform of the 30S subunit. This Mycobacterium sp. (strain JLS) protein is Small ribosomal subunit protein uS12.